The primary structure comprises 1342 residues: MEENEVESSSDAAPGPGRPEEPSESGLGVGTSEAVSADSSDAAAAPGQAEADDSGVGQSSDRGSRSQEEVSESSSSADPLPNSYLPDSSSVSHGPVAGVTGGPPALVHSSALPDPNMLVSDCTASSSDLGSAIDKIIESTIGPDLIQNCITVTSAEDGGAETTRYLILQGPDDGAPMTSPMSSSTLAHSLAAIEALADGPTSTSTCLEAQGGPSSPVQLPPASGAEEPDLQSLEAMMEVVVVQQFKCKMCQYRSSTKATLLRHMRERHFRPVAAAAAAAGKKGRLRKWSTSTKSQEEEGPEEEDDDDIVDAGAIDDLEEDSDYNPAEDEPRGRQLRLQRPTPSTPRPRRRPGRPRKLPRLEISDLPDGVEGEPLVSSQSGQSPPEPQDPEAPSSSGPGHLVAMGKVSRTPVEAGVSQSDAENAAPSCPDEHDTLPRRRGRPSRRFLGKKYRKYYYKSPKPLLRPFLCRICGSRFLSHEDLRFHVNSHEAGDPQLFKCLQCSYRSRRWSSLKEHMFNHVGSKPYKCDECSYTSVYRKDVIRHAAVHSRDRKKRPDPTPKLSSFPCPVCGRVYPMQKRLTQHMKTHSTEKPHMCDKCGKSFKKRYTFKMHLLTHIQAVANRRFKCEFCEFVCEDKKALLNHQLSHVSDKPFKCSFCPYRTFREDFLLSHVAVKHTGAKPFACEYCHFSTRHKKNLRLHVRCRHASSFEEWGRRHPEEPPSRRRPFFSLQQIEELKQQHSAAPGPPPSSPGPPEIPPEATTFQSSEAPSLLCSDTLGGATIIYQQGAEESTAMATQTALDLLLNMSAQRELGGTALQVAVVKSEDVEAGLASPGGQPSPEGATPQVVTLHVAEPGGGAAAESQLGPPDLPQITLAPGPFGGTGYSVITAPPMEEGTSAPGTPYSEEPAGEAAQAVVVSDTLKEAGTHYIMATDGTQLHHIELTADGSISFPSPDALASGAKWPLLQCGGLPRDGPEPPSPAKTHCVGDSQSSASSPPATSKALGLAVPPSPPSAATAASKKFSCKICAEAFPGRAEMESHKRAHAGPGAFKCPDCPFSARQWPEVRAHMAQHSSLRPHQCSQCSFASKNKKDLRRHMLTHTKEKPFACHLCGQRFNRNGHLKFHIQRLHSPDGRKSGTPTARAPTQTPTQTIILNSDDETLATLHTALQSSHGVLGPERLQQALSQEHIIVAQEQTVTNQEEAAYIQEITTADGQTVQHLVTSDNQVQYIISQDGVQHLLPQEYVVVPEGHHIQVQEGQITHIQYEQGAPFLQESQIQYVPVSPGQQLVTQAQLEAAAHSAVTAVADAAMAQAQGLFGTDETVPEHIQQLQHQGIEYDVITLADD.

Disordered regions lie at residues 1 to 102 (MEEN…VTGG) and 201 to 228 (TSTS…AEEP). A compositionally biased stretch (low complexity) spans 34–49 (AVSADSSDAAAAPGQA). Positions 201–217 (TSTSTCLEAQGGPSSPV) are enriched in polar residues. A C2H2-type 1 zinc finger spans residues 245–268 (FKCKMCQYRSSTKATLLRHMRERH). A disordered region spans residues 274 to 442 (AAAAAAGKKG…TLPRRRGRPS (169 aa)). Residues 297–327 (EEGPEEEDDDDIVDAGAIDDLEEDSDYNPAE) show a composition bias toward acidic residues. A compositionally biased stretch (basic residues) spans 346–357 (RPRRRPGRPRKL). C2H2-type zinc fingers lie at residues 465-487 (FLCR…VNSH), 495-517 (FKCL…MFNH), 523-545 (YKCD…AAVH), 562-584 (FPCP…MKTH), 590-612 (HMCD…LLTH), 621-643 (FKCE…QLSH), 649-672 (FKCS…AVKH), and 678-701 (FACE…RCRH). Disordered regions lie at residues 732–763 (LKQQ…QSSE) and 964–1013 (CGGL…SAAT). Positions 740 to 753 (PGPPPSSPGPPEIP) are enriched in pro residues. A phosphoserine mark is found at S976, S992, and S1007. Residues 986-997 (SQSSASSPPATS) are compositionally biased toward low complexity. 4 consecutive C2H2-type zinc fingers follow at residues 1019–1041 (FSCK…KRAH), 1047–1069 (FKCP…MAQH), 1075–1097 (HQCS…MLTH), and 1103–1126 (FACH…QRLH). K1022 participates in a covalent cross-link: Glycyl lysine isopeptide (Lys-Gly) (interchain with G-Cter in SUMO2). Residues 1041-1342 (HAGPGAFKCP…EYDVITLADD (302 aa)) are involved in the interaction with CCAR2. Phosphoserine is present on S1153.

This sequence belongs to the krueppel C2H2-type zinc-finger protein family. As to quaternary structure, interacts with NCOA6; may enhance ligand-dependent transcriptional activation by nuclear hormone receptors. Interacts with CNOT6. Interacts with CNOT9; the interaction is direct. Component of a nuclear receptor-mediated transcription complex composed of at least ZNF335, CCAR2 and EMSY; the complex stimulates the transcription of nuclear receptor target genes such as SOX9 and HOXA1. Within the complex interacts with EMSY and interacts (via C-terminus) with CCAR2. Interacts with members of histone H3'Lys4'(H3K4) methyltransferase complexes ASH2L, CXXC1, KMT2A/MLL1, RBBP5, SETD1A and WDR5. Component of a histone methylation complex composed of at least ZNF335, RBBP5, ASH2L and WDR5; the complex may have histone H3-specific methyltransferase activity, however does not have specificity for 'Lys-4' of histone H3. Interacts with RBBP5 and WDR5. Interacts with ASHL2. Components of this complex may associate with components of the ZNF335-CCAR2-EMSY nuclear receptor-mediated transcription complex to form a complex at least composed of ZNF335, HCFC1, CCAR2, EMSY, MKI67, RBBP5, ASH2L and WDR5. Within this complex also interacts with HCFC1 and MKI67. In terms of tissue distribution, ubiquitously expressed.

Its subcellular location is the nucleus. Its function is as follows. Component or associated component of some histone methyltransferase complexes may regulate transcription through recruitment of those complexes on gene promoters. Enhances ligand-dependent transcriptional activation by nuclear hormone receptors. Plays an important role in neural progenitor cell proliferation and self-renewal through the regulation of specific genes involved brain development, including REST. Also controls the expression of genes involved in somatic development and regulates, for instance, lymphoblast proliferation. The chain is Zinc finger protein 335 (ZNF335) from Homo sapiens (Human).